Consider the following 692-residue polypeptide: Zinc finger protein 180 (692 aa).

One can recognise a KRAB domain in the interval 72–145; it reads VNFKIVTVDF…GVKIERFTRD (74 aa). Residues Lys-138, Lys-159, Lys-168, Lys-191, Lys-198, Lys-226, Lys-304, Lys-313, and Lys-330 each participate in a glycyl lysine isopeptide (Lys-Gly) (interchain with G-Cter in SUMO2) cross-link. C2H2-type zinc fingers lie at residues 353-375, 381-403, 409-431, 437-459, 465-487, 493-515, 521-543, 549-571, 577-599, 605-627, 633-655, and 661-683; these read FECN…QRTH, YECS…QRTH, YRCN…QRTH, YECN…QRTH, YECN…QRIH, YECS…QRIH, and FTCI…QATH.

This sequence belongs to the krueppel C2H2-type zinc-finger protein family.

The protein localises to the nucleus. Functionally, may be involved in transcriptional regulation. The sequence is that of Zinc finger protein 180 (ZNF180) from Homo sapiens (Human).